We begin with the raw amino-acid sequence, 501 residues long: Probable malate:quinone oxidoreductase (501 aa).

The protein belongs to the MQO family. Requires FAD as cofactor.

The enzyme catalyses (S)-malate + a quinone = a quinol + oxaloacetate. The protein operates within carbohydrate metabolism; tricarboxylic acid cycle; oxaloacetate from (S)-malate (quinone route): step 1/1. This is Probable malate:quinone oxidoreductase from Mycolicibacterium paratuberculosis (strain ATCC BAA-968 / K-10) (Mycobacterium paratuberculosis).